Consider the following 227-residue polypeptide: LexA repressor (227 aa).

A DNA-binding region (H-T-H motif) is located at residues phenylalanine 25 to threonine 45. Catalysis depends on for autocatalytic cleavage activity residues serine 148 and lysine 186.

The protein belongs to the peptidase S24 family. Homodimer.

It catalyses the reaction Hydrolysis of Ala-|-Gly bond in repressor LexA.. In terms of biological role, represses a number of genes involved in the response to DNA damage (SOS response), including recA and lexA. In the presence of single-stranded DNA, RecA interacts with LexA causing an autocatalytic cleavage which disrupts the DNA-binding part of LexA, leading to derepression of the SOS regulon and eventually DNA repair. The polypeptide is LexA repressor (Cereibacter sphaeroides (strain ATCC 17029 / ATH 2.4.9) (Rhodobacter sphaeroides)).